Consider the following 261-residue polypeptide: Pimeloyl-[acyl-carrier protein] methyl ester esterase (261 aa).

An AB hydrolase-1 domain is found at 16-241 (LVLIHGWGMN…QASHAPFISH (226 aa)). Residues Trp22, 82 to 83 (SL), and 143 to 147 (FMTLQ) each bind substrate. Ser82 (nucleophile) is an active-site residue. Active-site residues include Asp207 and His235. His235 lines the substrate pocket.

It belongs to the AB hydrolase superfamily. Carboxylesterase BioH family. As to quaternary structure, monomer.

It is found in the cytoplasm. The enzyme catalyses 6-carboxyhexanoyl-[ACP] methyl ester + H2O = 6-carboxyhexanoyl-[ACP] + methanol + H(+). It functions in the pathway cofactor biosynthesis; biotin biosynthesis. The physiological role of BioH is to remove the methyl group introduced by BioC when the pimeloyl moiety is complete. It allows to synthesize pimeloyl-ACP via the fatty acid synthetic pathway through the hydrolysis of the ester bonds of pimeloyl-ACP esters. This Aliivibrio salmonicida (strain LFI1238) (Vibrio salmonicida (strain LFI1238)) protein is Pimeloyl-[acyl-carrier protein] methyl ester esterase.